Here is a 234-residue protein sequence, read N- to C-terminus: Phosphoribosylaminoimidazole-succinocarboxamide synthase (234 aa).

The protein belongs to the SAICAR synthetase family.

It catalyses the reaction 5-amino-1-(5-phospho-D-ribosyl)imidazole-4-carboxylate + L-aspartate + ATP = (2S)-2-[5-amino-1-(5-phospho-beta-D-ribosyl)imidazole-4-carboxamido]succinate + ADP + phosphate + 2 H(+). The protein operates within purine metabolism; IMP biosynthesis via de novo pathway; 5-amino-1-(5-phospho-D-ribosyl)imidazole-4-carboxamide from 5-amino-1-(5-phospho-D-ribosyl)imidazole-4-carboxylate: step 1/2. This is Phosphoribosylaminoimidazole-succinocarboxamide synthase from Pyrobaculum aerophilum (strain ATCC 51768 / DSM 7523 / JCM 9630 / CIP 104966 / NBRC 100827 / IM2).